The chain runs to 661 residues: MNPDLRKERASATFNPELITHILDGSPENTRRRREIENLILNDPDFQHEDYNFLTRSQRYEVAVKKSATMVKKMREYGISDPEEIMWFKKLYLANFVEPVGLNYSMFIPTLLNQGTTAQQEKWMRPSQELQIIGTYAQTEMGHGTHLRGLETTATYDPKTQEFILNSPTVTSIKWWPGGLGKTSNHAIVLAQLITQGECYGLHAFVVPIREIGTHKPLPGITVGDIGPKFGYEEMDNGYLKMDNYRIPRENMLMKYAQVKPDGTYVKPLSNKLTYGTMVFVRSFLVGNAAQSLSKACTIAIRYSAVRRQSEIKQSEPEPQILDFQTQQYKLFPLLATAYAFHFVGRYMKETYLRINESIGQGDLSELPELHALTAGLKAFTTWTANAGIEECRMACGGHGYSHSSGIPNIYVTFTPACTFEGENTVMMLQTARFLMKIYDQVRSGKLVGGMVSYLNDLPSQRIQPQQVAVWPTMVDINSLEGLTEAYKLRAARLVEIAAKNLQTHVSHRKSKEVAWNLTSVDLVRASEAHCHYVVVKVFSDKLPKIQDKAVQAVLRNLCLLYSLYGISQKGGDFLEGSIITGAQLSQVNARILELLTLIRPNAVALVDAFDFKDMTLGSVLGRYDGNVYENLFEWAKKSPLNKTEVHESYHKHLKPLQSKL.

Residue serine 26 is modified to Phosphoserine. Lysine 65 is modified (N6-acetyllysine). 2 positions are modified to N6-succinyllysine: lysine 89 and lysine 90. An FAD-binding site is contributed by threonine 139. N6-succinyllysine is present on lysine 159. An FAD-binding site is contributed by glycine 178. Lysine 216 carries the post-translational modification N6-acetyllysine. Lysine 241 carries the post-translational modification N6-succinyllysine. An N6-acetyllysine mark is found at lysine 255, lysine 267, and lysine 272. An N6-succinyllysine modification is found at lysine 349. Glutamate 421 acts as the Proton acceptor in catalysis. 2 positions are modified to N6-acetyllysine; alternate: lysine 437 and lysine 446. 2 positions are modified to N6-succinyllysine; alternate: lysine 437 and lysine 446. Lysine 500 is subject to N6-acetyllysine. Lysine 512 is modified (N6-acetyllysine; alternate). Lysine 512 carries the N6-succinyllysine; alternate modification. At lysine 542 the chain carries N6-succinyllysine. Lysine 637 bears the N6-acetyllysine; alternate mark. Position 637 is an N6-succinyllysine; alternate (lysine 637). An N6-succinyllysine modification is found at lysine 643. Serine 649 carries the post-translational modification Phosphoserine. N6-acetyllysine is present on lysine 652. Lysine 655 is modified (N6-succinyllysine). Residues serine 659–leucine 661 carry the Microbody targeting signal motif.

The protein belongs to the acyl-CoA oxidase family. Homodimer. The enzyme contains three components A, B and C, the latter two being produced from the first by a proteolytic cleavage. Interacts with LONP2. FAD serves as cofactor. Expressed in Schwann cells. Expressed (at protein level) in liver.

The protein localises to the peroxisome. The catalysed reaction is a 2,3-saturated acyl-CoA + O2 = a (2E)-enoyl-CoA + H2O2. The enzyme catalyses hexadecanoyl-CoA + O2 = (2E)-hexadecenoyl-CoA + H2O2. It carries out the reaction dodecanoyl-CoA + O2 = (2E)-dodecenoyl-CoA + H2O2. It catalyses the reaction octanoyl-CoA + O2 = (2E)-octenoyl-CoA + H2O2. The catalysed reaction is decanoyl-CoA + O2 = (2E)-decenoyl-CoA + H2O2. The enzyme catalyses tetradecanoyl-CoA + O2 = (2E)-tetradecenoyl-CoA + H2O2. It carries out the reaction hexadecanedioyl-CoA + O2 = (2E)-hexadecenedioyl-CoA + H2O2. It catalyses the reaction tetracosanoyl-CoA + O2 = (2E)-tetracosenoyl-CoA + H2O2. The catalysed reaction is glutaryl-CoA + O2 = (2E)-glutaconyl-CoA + H2O2. The enzyme catalyses hexanoyl-CoA + O2 = (2E)-hexenoyl-CoA + H2O2. It carries out the reaction octadecanoyl-CoA + O2 = (2E)-octadecenoyl-CoA + H2O2. It catalyses the reaction (5Z,8Z,11Z,14Z,17Z)-eicosapentaenoyl-CoA + O2 = (2E,5Z,8Z,11Z,14Z,17Z)-icosahexaenoyl-CoA + H2O2. The catalysed reaction is (6Z,9Z,12Z,15Z,18Z,21Z)-tetracosahexaenoyl-CoA + O2 = (2E,6Z,9Z,12Z,15Z,18Z,21Z)-tetracosaheptaenoyl-CoA + H2O2. The protein operates within lipid metabolism; peroxisomal fatty acid beta-oxidation. Functionally, involved in the initial and rate-limiting step of peroxisomal beta-oxidation of straight-chain saturated and unsaturated very-long-chain fatty acids. Catalyzes the desaturation of fatty acyl-CoAs such as palmitoyl-CoA (hexadecanoyl-CoA) to 2-trans-enoyl-CoAs ((2E)-enoyl-CoAs) such as (2E)-hexadecenoyl-CoA, and donates electrons directly to molecular oxygen (O(2)), thereby producing hydrogen peroxide (H(2)O(2)). Shows highest activity against medium-chain fatty acyl-CoAs. Shows optimum activity with a chain length of 10 carbons (decanoyl-CoA) in vitro. Its function is as follows. Is active against a much broader range of substrates and shows activity towards long-chain acyl-CoAs. In Rattus norvegicus (Rat), this protein is Peroxisomal acyl-coenzyme A oxidase 1.